The primary structure comprises 234 residues: uncharacterized protein (234 aa).

The next 3 membrane-spanning stretches (helical) occupy residues 32 to 52 (GLRT…VSVL), 62 to 82 (IPAQ…LKEG), and 106 to 126 (QGLF…NIAL).

The protein belongs to the MgtC/SapB family.

It is found in the cell membrane. This is an uncharacterized protein from Synechocystis sp. (strain ATCC 27184 / PCC 6803 / Kazusa).